Consider the following 299-residue polypeptide: 33 kDa chaperonin (299 aa).

Disulfide bonds link cysteine 234–cysteine 236 and cysteine 268–cysteine 271.

This sequence belongs to the HSP33 family. Post-translationally, under oxidizing conditions two disulfide bonds are formed involving the reactive cysteines. Under reducing conditions zinc is bound to the reactive cysteines and the protein is inactive.

Its subcellular location is the cytoplasm. In terms of biological role, redox regulated molecular chaperone. Protects both thermally unfolding and oxidatively damaged proteins from irreversible aggregation. Plays an important role in the bacterial defense system toward oxidative stress. This is 33 kDa chaperonin from Pseudomonas putida (strain GB-1).